The following is a 317-amino-acid chain: Phosphatidylglycerol--prolipoprotein diacylglyceryl transferase 2 (317 aa).

4 helical membrane passes run 19 to 39 (IPLR…VWLG), 51 to 71 (GVIA…GRLY), 93 to 113 (VWEG…GAWI), and 120 to 140 (IPLP…QAIG). Arg-141 serves as a coordination point for a 1,2-diacyl-sn-glycero-3-phospho-(1'-sn-glycerol). 3 helical membrane-spanning segments follow: residues 180 to 200 (PTFL…LWAA), 211 to 230 (FALY…YLRI), and 241 to 261 (LNNW…VVSA). Positions 275-317 (GAGADGRTDDPRPADASVGLASGPPGNSTPRRATESWNVRNRS) are disordered. Positions 299–317 (PGNSTPRRATESWNVRNRS) are enriched in polar residues.

It belongs to the Lgt family.

The protein localises to the cell membrane. It catalyses the reaction L-cysteinyl-[prolipoprotein] + a 1,2-diacyl-sn-glycero-3-phospho-(1'-sn-glycerol) = an S-1,2-diacyl-sn-glyceryl-L-cysteinyl-[prolipoprotein] + sn-glycerol 1-phosphate + H(+). It participates in protein modification; lipoprotein biosynthesis (diacylglyceryl transfer). In terms of biological role, catalyzes the transfer of the diacylglyceryl group from phosphatidylglycerol to the sulfhydryl group of the N-terminal cysteine of a prolipoprotein, the first step in the formation of mature lipoproteins. In Streptomyces coelicolor (strain ATCC BAA-471 / A3(2) / M145), this protein is Phosphatidylglycerol--prolipoprotein diacylglyceryl transferase 2.